The primary structure comprises 146 residues: Large ribosomal subunit protein uL15 (146 aa).

The disordered stretch occupies residues 1 to 46 (MLHQIKPFKGARKTVKRLGRGCGSGTGKTSGKGHKGQLARSGGGVR). The segment covering 9–19 (KGARKTVKRLG) has biased composition (basic residues). The segment covering 20-30 (RGCGSGTGKTS) has biased composition (gly residues).

It belongs to the universal ribosomal protein uL15 family. Part of the 50S ribosomal subunit.

Its function is as follows. Binds to the 23S rRNA. This Phytoplasma mali (strain AT) protein is Large ribosomal subunit protein uL15.